Reading from the N-terminus, the 281-residue chain is Putative outer membrane protein BBA52 (281 aa).

A disordered region spans residues 162-281 (KRISDNQSKL…FFDSLEDQFI (120 aa)). Polar residues predominate over residues 179–196 (NKSVGSKFSKNSRPSKSP). The span at 219–249 (EFLDDPSQESDELEREYQDDELESEDPDDGE) shows a compositional bias: acidic residues. Over residues 250 to 262 (REYQDDRESRDDT) the composition is skewed to basic and acidic residues. Residues 263-281 (FNEDQSEDEFFDSLEDQFI) show a composition bias toward acidic residues.

Its subcellular location is the cell outer membrane. The chain is Putative outer membrane protein BBA52 from Borreliella burgdorferi (strain ATCC 35210 / DSM 4680 / CIP 102532 / B31) (Borrelia burgdorferi).